Here is a 78-residue protein sequence, read N- to C-terminus: uncharacterized protein (78 aa).

Residues 58-78 form a disordered region; the sequence is EANDPEKKIPSTAAKAISLSP.

This is an uncharacterized protein from Vaccinia virus (strain Copenhagen) (VACV).